The following is a 254-amino-acid chain: Probable derlin-2 homolog (254 aa).

The Cytoplasmic segment spans residues 1–17 (MAQPFEDWYKNLPIVTK). The helical transmembrane segment at 18-38 (IYMTGCVVTSVSVYLGLVGPL) threads the bilayer. Topologically, residues 39–95 (RLYLNFPLVFGKYEFWRLFTNFFFYDEIGMNFFFHMYFLVRHSRLLEESSFRGRSAD) are lumenal. The chain crosses the membrane as a helical span at residues 96–116 (YLFMWIFGSFLLLIMDAFLFY). The Cytoplasmic segment spans residues 117 to 118 (TK). Residues 119-139 (IVTKVLFLAPSIAFMVIYVWS) traverse the membrane as a helical segment. The Lumenal portion of the chain corresponds to 140 to 146 (RRNPNMH). A helical membrane pass occupies residues 147–167 (ISFLGLFTFSAPYLPWVILIM). The Cytoplasmic portion of the chain corresponds to 168 to 254 (GYLFNHDLTT…FLNEDDLDQQ (87 aa)).

Belongs to the derlin family.

The protein resides in the endoplasmic reticulum membrane. May be involved in the degradation process of specific misfolded endoplasmic reticulum (ER) luminal proteins. May also be involved in endoplasmic reticulum stress-induced pre-emptive quality control, a mechanism that selectively attenuates the translocation of newly synthesized proteins into the endoplasmic reticulum and reroutes them to the cytosol for proteasomal degradation. The sequence is that of Probable derlin-2 homolog (derl2) from Dictyostelium discoideum (Social amoeba).